The primary structure comprises 65 residues: Large ribosomal subunit protein bL31 (65 aa).

4 residues coordinate Zn(2+): Cys16, Cys18, Cys36, and Cys39.

It belongs to the bacterial ribosomal protein bL31 family. Type A subfamily. Part of the 50S ribosomal subunit. Requires Zn(2+) as cofactor.

Functionally, binds the 23S rRNA. This Campylobacter jejuni subsp. doylei (strain ATCC BAA-1458 / RM4099 / 269.97) protein is Large ribosomal subunit protein bL31.